A 277-amino-acid chain; its full sequence is Large ribosomal subunit protein uL2 (277 aa).

2 disordered regions span residues 32–58 (KSLTKGKKFKSGRDSSGRISIRRRGGG) and 225–277 (VAMN…RRNK). Residues 258-277 (YKTRKKKRYSDKFIIKRRNK) are compositionally biased toward basic residues.

Belongs to the universal ribosomal protein uL2 family. As to quaternary structure, part of the 50S ribosomal subunit. Forms a bridge to the 30S subunit in the 70S ribosome.

In terms of biological role, one of the primary rRNA binding proteins. Required for association of the 30S and 50S subunits to form the 70S ribosome, for tRNA binding and peptide bond formation. It has been suggested to have peptidyltransferase activity; this is somewhat controversial. Makes several contacts with the 16S rRNA in the 70S ribosome. This Borreliella burgdorferi (strain ATCC 35210 / DSM 4680 / CIP 102532 / B31) (Borrelia burgdorferi) protein is Large ribosomal subunit protein uL2.